The following is a 545-amino-acid chain: Bifunctional purine biosynthesis protein PurH (545 aa).

The region spanning 1–150 (MTNTNRPIRR…KNHATVAIVT (150 aa)) is the MGS-like domain.

It belongs to the PurH family.

The enzyme catalyses (6R)-10-formyltetrahydrofolate + 5-amino-1-(5-phospho-beta-D-ribosyl)imidazole-4-carboxamide = 5-formamido-1-(5-phospho-D-ribosyl)imidazole-4-carboxamide + (6S)-5,6,7,8-tetrahydrofolate. The catalysed reaction is IMP + H2O = 5-formamido-1-(5-phospho-D-ribosyl)imidazole-4-carboxamide. It participates in purine metabolism; IMP biosynthesis via de novo pathway; 5-formamido-1-(5-phospho-D-ribosyl)imidazole-4-carboxamide from 5-amino-1-(5-phospho-D-ribosyl)imidazole-4-carboxamide (10-formyl THF route): step 1/1. The protein operates within purine metabolism; IMP biosynthesis via de novo pathway; IMP from 5-formamido-1-(5-phospho-D-ribosyl)imidazole-4-carboxamide: step 1/1. The sequence is that of Bifunctional purine biosynthesis protein PurH from Bifidobacterium longum (strain DJO10A).